The following is a 197-amino-acid chain: Phosphoheptose isomerase (197 aa).

The region spanning 34–196 (MVQCLLGGNK…DRTLFPQDEQ (163 aa)) is the SIS domain. Residue 49 to 51 (NGG) participates in substrate binding. Zn(2+) is bound by residues H58 and E62. Residues E62, 91–92 (ND), 117–119 (STS), S122, and Q172 each bind substrate. Residues Q172 and H180 each coordinate Zn(2+).

Belongs to the SIS family. GmhA subfamily. In terms of assembly, homotetramer. Zn(2+) serves as cofactor.

Its subcellular location is the cytoplasm. It carries out the reaction 2 D-sedoheptulose 7-phosphate = D-glycero-alpha-D-manno-heptose 7-phosphate + D-glycero-beta-D-manno-heptose 7-phosphate. It participates in carbohydrate biosynthesis; D-glycero-D-manno-heptose 7-phosphate biosynthesis; D-glycero-alpha-D-manno-heptose 7-phosphate and D-glycero-beta-D-manno-heptose 7-phosphate from sedoheptulose 7-phosphate: step 1/1. Functionally, catalyzes the isomerization of sedoheptulose 7-phosphate in D-glycero-D-manno-heptose 7-phosphate. The chain is Phosphoheptose isomerase from Shewanella frigidimarina (strain NCIMB 400).